A 579-amino-acid chain; its full sequence is MAENESNVVVDQGQTKLSDLWTKEDYWAIWLGFVILIAGMWLFLANPSPEFAQKVDKANGVMAAEAARAPFKTLAYYKAQDDKGKLQGMDTPSGKAIGAFLTTPGAWASDPLEAFVLSKEAADERNAAAKAKFESAKVKSDAALAAAQAAEAAAAGAAFADAALNTEAQAKIAEWRAEHAKMKAAEKKTKTKPFNIATSLPMLMVALGLFFAVGMKFMGHDVPKFLVGFIGVFFVAVLALMMGHQSTMKYWGIGAEAWAIIIGMLVANTVGTPSFIKPALQVEYYIKTGLVLLGAEVLFDKIIAIGIPGIFVAWVVTPIVLICTFIFGQKILKMPSKTLNIVISSDMSVCGTSAAIATAAACRAKKEELTLAIGLSLVFTAIMMIAMPAFIKAVGMPQVLGGAWMGGTIDATGAVAAAGAFLGEKALYVAATIKMIQNVLIGVVAFGVAVYWCARVECREGHSVGWIEIWHRFPKFVLGFLAASVLFSVISGSLGSDMSQIMVNQGVLKGLSSPLRNWFFCLAFTSIGLATNFRELAHYFKGGKPLILYVAGQSFNLVLTLAMAYVMFYIVFPEITAKI.

11 helical membrane passes run 26–45 (YWAIWLGFVILIAGMWLFLA), 193–215 (PFNIATSLPMLMVALGLFFAVGM), 225–243 (FLVGFIGVFFVAVLALMMG), 250–272 (YWGIGAEAWAIIIGMLVANTVGT), 305–327 (IGIPGIFVAWVVTPIVLICTFIF), 369–391 (LTLAIGLSLVFTAIMMIAMPAFI), 401–423 (GGAWMGGTIDATGAVAAAGAFLG), 436–456 (IQNVLIGVVAFGVAVYWCARV), 476–495 (FVLGFLAASVLFSVISGSLG), 515–534 (LRNWFFCLAFTSIGLATNFR), and 549–571 (YVAGQSFNLVLTLAMAYVMFYIV).

The protein belongs to the UPF0324 family.

It localises to the cell membrane. In Nitratidesulfovibrio vulgaris (strain ATCC 29579 / DSM 644 / CCUG 34227 / NCIMB 8303 / VKM B-1760 / Hildenborough) (Desulfovibrio vulgaris), this protein is UPF0324 membrane protein DVU_2133.